A 263-amino-acid polypeptide reads, in one-letter code: MFVSRLAASGLLLLALMALSLDGKPVQQWSQGRPPGPPIPRLVVQQWSQGLPPGPPIPRLVVQQWSQGLPPGPPIPPLVVQQWSQGLPPRPKIPPLVVQQWSQGLPPRPKIPPLVVQKWDPPPVSPPLLLQPHESPAGGTTALREELSLGPEAASGPAAAGADGGRSGSKAPAALHRLSKSKGASATSASASRPMRDLRTDGKQARQNWARMVNPDHHAVGGCCCGGGGGGARRLKGLVKKGVAKGCFGLKLDRIGTMSGLGC.

Residues 1–23 form the signal peptide; sequence MFVSRLAASGLLLLALMALSLDG. Positions 24-30 are excised as a propeptide; the sequence is KPVQQWS. Gln31 bears the Pyrrolidone carboxylic acid mark. A propeptide spanning residues 42 to 48 is cleaved from the precursor; the sequence is LVVQQWS. Gln49 bears the Pyrrolidone carboxylic acid mark. The propeptide occupies 60–66; sequence LVVQQWS. Gln67 carries the post-translational modification Pyrrolidone carboxylic acid. Residues 78-84 constitute a propeptide that is removed on maturation; the sequence is LVVQQWS. The residue at position 85 (Gln85) is a Pyrrolidone carboxylic acid. The tract at residues 89-95 is angiotensin-converting enzyme active site binding; the sequence is PRPKIPP. A propeptide spanning residues 96–102 is cleaved from the precursor; the sequence is LVVQQWS. Pyrrolidone carboxylic acid is present on Gln103. The segment at 107 to 113 is angiotensin-converting enzyme active site binding; that stretch reads PRPKIPP. Residues 114–116 constitute a propeptide that is removed on maturation; that stretch reads LVV. Gln117 bears the Pyrrolidone carboxylic acid mark. A propeptide spanning residues 128–130 is cleaved from the precursor; sequence LLL. At Gln131 the chain carries Pyrrolidone carboxylic acid. A propeptide spanning residues 137 to 241 is cleaved from the precursor; sequence AGGTTALREE…ARRLKGLVKK (105 aa). Disordered regions lie at residues 152-171 and 177-205; these read EAASGPAAAGADGGRSGSKA and RLSKSKGASATSASASRPMRDLRTDGKQA. A compositionally biased stretch (low complexity) spans 181–192; sequence SKGASATSASAS. A compositionally biased stretch (basic and acidic residues) spans 194–204; that stretch reads PMRDLRTDGKQ. Cys247 and Cys263 are oxidised to a cystine.

In the N-terminal section; belongs to the bradykinin-potentiating peptide family. It in the C-terminal section; belongs to the natriuretic peptide family. In terms of tissue distribution, expressed by the venom gland.

It localises to the secreted. Functionally, inhibits the rabbit lung angiotensin-converting enzyme (ACE) (IC(50)=15 uM). Contracts the rat gastric fundus smooth muscle in a rapid and transient manner. Its function is as follows. Causes no contraction of the rat gastric fundus smooth muscle even at high concentrations. Causes very weak contraction of the isolated guinea pig ileum. Causes weak contraction on rat uterus. Inhibits the activity of the angiotensin-converting enzyme (ACE) by a preferential interaction with its C-domain (Ki=30 nM, IC(50)=1.1 uM). It binds ACE in a zinc-independent manner. Also potentiates the hypotensive effects of bradykinin. Causes high contraction of the isolated guinea pig ileum and weak contraction on rat uterus. In terms of biological role, inhibits the activity of the angiotensin-converting enzyme (ACE) by interacting with the same potency to its C- and N-domains. Inhibits the rabbit lung angiotensin-converting enzyme (ACE) (IC(50)=7.1 uM). Causes weak contraction of the isolated guinea pig ileum. Causes weak contraction on rat uterus. Functionally, inhibits the rabbit lung angiotensin-converting enzyme (ACE) (IC(50)=46 uM). Synthetic Leu3-blomhotin contracts the rat gastric fundus smooth muscle in a rapid and transient manner. Causes moderate contraction of the isolated guinea pig ileum. Causes weak contraction on rat uterus. Its function is as follows. Causes weak contraction of the isolated guinea pig ileum. Causes about 50-fold more potentiating activity on rat uterus than on guinea pig ileum. Synthetic peptide potentiates the bradykinin in vivo. In terms of biological role, synthetic peptide does not show any bradykinin-potentiating effects. Functionally, has a vasorelaxant activity in rat aortic strips and a diuretic potency in anesthetized rats. May act by activating natriuretic receptors (NPR1 and/or NPR2). The protein is Bradykinin-potentiating and C-type natriuretic peptides of Gloydius blomhoffii (Mamushi).